The following is a 338-amino-acid chain: Elongation factor Ts, mitochondrial (338 aa).

The N-terminal 42 residues, 1-42 (MSPSIAMFTLTPNARALASKTSKMDLIKNLRERTGAPIVDVK), are a transit peptide targeting the mitochondrion.

The protein belongs to the EF-Ts family.

The protein localises to the mitochondrion. In terms of biological role, associates with the EF-Tu.GDP complex and induces the exchange of GDP to GTP. It remains bound to the aminoacyl-tRNA.EF-Tu.GTP complex up to the GTP hydrolysis stage on the ribosome. The sequence is that of Elongation factor Ts, mitochondrial from Ostreococcus tauri.